A 126-amino-acid chain; its full sequence is uncharacterized protein (126 aa).

Transmembrane regions (helical) follow at residues 40–57 (IDKW…VSFF) and 72–94 (ILIA…ILGG).

Its subcellular location is the cell membrane. This is an uncharacterized protein from Pasteurella multocida (strain Pm70).